Reading from the N-terminus, the 181-residue chain is 28 kDa heat- and acid-stable phosphoprotein (181 aa).

Residues 1–14 show a composition bias toward basic residues; the sequence is MPKGGRKGGHKGRA. Positions 1-117 are disordered; sequence MPKGGRKGGH…SRREREEIEK (117 aa). Thr-18 bears the Phosphothreonine mark. Ser-19 carries the post-translational modification Phosphoserine. A compositionally biased stretch (basic and acidic residues) spans 30–59; it reads EKQKAREEEEQKEGGDGAAGDPKKEKKSLD. Lys-52 is covalently cross-linked (Glycyl lysine isopeptide (Lys-Gly) (interchain with G-Cter in SUMO2)). Phosphoserine is present on residues Ser-57, Ser-60, and Ser-63. Over residues 60-69 the composition is skewed to acidic residues; the sequence is SDESEDEEDD. Phosphotyrosine is present on Tyr-70. Residues 102–117 are compositionally biased toward basic and acidic residues; that stretch reads DGPKELSRREREEIEK. Lys-126 bears the N6-methyllysine mark. An N6-acetyllysine mark is found at Lys-132 and Lys-164. The span at 151–167 shows a compositional bias: basic and acidic residues; sequence EEAARKKEEERKAKDDA. Residues 151–181 are disordered; it reads EEAARKKEEERKAKDDATLSGKRMQSLSLNK. Residues Ser-176 and Ser-178 each carry the phosphoserine modification.

This sequence belongs to the PDAP1 family.

In terms of biological role, enhances PDGFA-stimulated cell growth in fibroblasts, but inhibits the mitogenic effect of PDGFB. The polypeptide is 28 kDa heat- and acid-stable phosphoprotein (PDAP1) (Homo sapiens (Human)).